The chain runs to 345 residues: RDS/peripherin-like protein xRDS36 (345 aa).

Over 1–24 the chain is Cytoplasmic; sequence MVLFKAKFSFQRRVKLAQTLWLLS. A helical membrane pass occupies residues 25–43; that stretch reads WLSVLVGCLTFGMGIFLKV. The Lumenal portion of the chain corresponds to 44 to 61; that stretch reads QLWIHNEVMDNTTAHAVP. Residue asparagine 54 is glycosylated (N-linked (GlcNAc...) asparagine). The chain crosses the membrane as a helical span at residues 62–80; that stretch reads NTVITAGLVGILLGYFAGK. Topologically, residues 81–99 are cytoplasmic; it reads ISQASMDLTKYQRWKSFMM. Residues 100–123 traverse the membrane as a helical segment; the sequence is PFFFLAILSCIVCLAALVLSVALR. At 124–264 the chain is on the lumenal side; sequence GTLEESLKIG…LGYYTGIMAT (141 aa). N-linked (GlcNAc...) asparagine glycosylation occurs at asparagine 229. Residues 265 to 290 form a helical membrane-spanning segment; the sequence is NGAAVTLSFLLQASVLVSLRYVQTSM. Over 291–345 the chain is Cytoplasmic; the sequence is DKIRDPDDVEADTEGFLLEKGVMETVNSSLEKIKDLFKSNQVETAEGGGEGAAGS.

It belongs to the PRPH2/ROM1 family. As to quaternary structure, homodimer; disulfide-linked. As to expression, rod specific.

Its subcellular location is the membrane. The chain is RDS/peripherin-like protein xRDS36 (rds36) from Xenopus laevis (African clawed frog).